The primary structure comprises 55 residues: uncharacterized protein (55 aa).

This is an uncharacterized protein from Thermoproteus tenax (TTV1).